We begin with the raw amino-acid sequence, 339 residues long: Aspartate carbamoyltransferase catalytic subunit (339 aa).

Residues Arg-60 and Thr-61 each contribute to the carbamoyl phosphate site. Residue Lys-88 participates in L-aspartate binding. The carbamoyl phosphate site is built by Arg-110, His-143, and Gln-146. L-aspartate contacts are provided by Arg-183 and Arg-254. The carbamoyl phosphate site is built by Gly-295 and Pro-296.

It belongs to the aspartate/ornithine carbamoyltransferase superfamily. ATCase family. In terms of assembly, heterododecamer (2C3:3R2) of six catalytic PyrB chains organized as two trimers (C3), and six regulatory PyrI chains organized as three dimers (R2).

The catalysed reaction is carbamoyl phosphate + L-aspartate = N-carbamoyl-L-aspartate + phosphate + H(+). It functions in the pathway pyrimidine metabolism; UMP biosynthesis via de novo pathway; (S)-dihydroorotate from bicarbonate: step 2/3. Catalyzes the condensation of carbamoyl phosphate and aspartate to form carbamoyl aspartate and inorganic phosphate, the committed step in the de novo pyrimidine nucleotide biosynthesis pathway. The chain is Aspartate carbamoyltransferase catalytic subunit from Prochlorococcus marinus (strain MIT 9312).